A 518-amino-acid polypeptide reads, in one-letter code: Bifunctional purine biosynthesis protein PurH (518 aa).

The 146-residue stretch at 1-146 (MARIALISVS…KNHESVSILT (146 aa)) folds into the MGS-like domain.

It belongs to the PurH family.

The enzyme catalyses (6R)-10-formyltetrahydrofolate + 5-amino-1-(5-phospho-beta-D-ribosyl)imidazole-4-carboxamide = 5-formamido-1-(5-phospho-D-ribosyl)imidazole-4-carboxamide + (6S)-5,6,7,8-tetrahydrofolate. The catalysed reaction is IMP + H2O = 5-formamido-1-(5-phospho-D-ribosyl)imidazole-4-carboxamide. It functions in the pathway purine metabolism; IMP biosynthesis via de novo pathway; 5-formamido-1-(5-phospho-D-ribosyl)imidazole-4-carboxamide from 5-amino-1-(5-phospho-D-ribosyl)imidazole-4-carboxamide (10-formyl THF route): step 1/1. The protein operates within purine metabolism; IMP biosynthesis via de novo pathway; IMP from 5-formamido-1-(5-phospho-D-ribosyl)imidazole-4-carboxamide: step 1/1. The polypeptide is Bifunctional purine biosynthesis protein PurH (Prochlorococcus marinus (strain MIT 9211)).